The chain runs to 421 residues: Bifunctional NAD biosynthesis protein NadR (421 aa).

The nicotinamide mononucleotide adenylyltransferase stretch occupies residues 57 to 224 (EKKVGVIFGK…KFIPKEARPF (168 aa)). NAD(+) is bound by residues 64 to 67 (FGKF), H71, R98, 139 to 152 (EDGI…WQSW), 172 to 174 (SSE), 199 to 201 (FNV), 254 to 256 (SAW), and 289 to 292 (YIDY). Residues 225–421 (FAKTVAILGG…TTFPIKGTSQ (197 aa)) are ribosylnicotinamide kinase.

It in the N-terminal section; belongs to the bacterial NMN adenylyltransferase family. In the C-terminal section; belongs to the bacterial RNK family. As to quaternary structure, homotetramer.

Its subcellular location is the cell membrane. It localises to the cytoplasm. It catalyses the reaction beta-nicotinamide D-ribonucleotide + ATP + H(+) = diphosphate + NAD(+). The enzyme catalyses beta-nicotinamide D-riboside + ATP = beta-nicotinamide D-ribonucleotide + ADP + H(+). The protein operates within cofactor biosynthesis; NAD(+) biosynthesis [regulation]. It functions in the pathway cofactor biosynthesis; NAD(+) biosynthesis; NAD(+) from nicotinamide D-ribonucleotide: step 1/1. Its activity is regulated as follows. Feed-back regulated by NAD. At high levels of NAD the RN kinase activity is inhibited. This enzyme has two activities: nicotinamide mononucleotide (NMN) adenylyltransferase and ribosylnicotinamide (RN) kinase. The RN kinase activity catalyzes the phosphorylation of RN to form nicotinamide ribonucleotide. The NMN adenylyltransferase activity catalyzes the transfer of the AMP moiety of ATP to nicotinamide ribonucleotide to form NAD(+). This is Bifunctional NAD biosynthesis protein NadR (nadR) from Haemophilus influenzae (strain ATCC 51907 / DSM 11121 / KW20 / Rd).